Consider the following 340-residue polypeptide: Glutaminyl-peptide cyclotransferase (340 aa).

The first 23 residues, 1-23 (MAIGSVVFAAAGLLLLLLPPSHQ), serve as a signal peptide directing secretion. Asn-42 carries N-linked (GlcNAc...) asparagine glycosylation. The alpha-D-mannopyranose site is built by Arg-85 and Glu-91. The cysteines at positions 113 and 136 are disulfide-linked. Residue Asp-131 coordinates Zn(2+). Residues Gln-151 and Arg-155 each coordinate alpha-D-mannopyranose. A glycan (N-linked (GlcNAc...) asparagine) is linked at Asn-156. Glu-170 serves as the catalytic Proton acceptor. A Zn(2+)-binding site is contributed by Glu-171. Residue Asp-218 is the Proton acceptor of the active site. Residue His-297 participates in Zn(2+) binding. Residue Leu-306 participates in alpha-D-mannopyranose binding.

This sequence belongs to the glutaminyl-peptide cyclotransferase family.

Its subcellular location is the secreted. The catalysed reaction is N-terminal L-glutaminyl-[peptide] = N-terminal 5-oxo-L-prolyl-[peptide] + NH4(+). Its activity is regulated as follows. Inhibited by imidazoles (imidazole, benzimidazole, 1-benzylimidazole, 1-methylimidazole, P150/03, N-omega-acetylhistamine and 4-methylimidazole) and cysteamines (cysteamine, N-dimethylcysteamine and N-diethylcysteamine). Partially inhibited by PDB50 1(3,4-dimethoxyphenyl)-3-(3-imidazol-1-ylpropyl)thiourea. Acts as a glutaminyl-peptide cyclotransferase. Responsible for the biosynthesis of pyroglutamyl peptides. Might be more efficient in the conversion of tri and tetrapeptides in vitro. Might have a relative preference for substrates containing hydrophobic amino acids in vitro. This Drosophila melanogaster (Fruit fly) protein is Glutaminyl-peptide cyclotransferase.